A 241-amino-acid polypeptide reads, in one-letter code: Small ribosomal subunit protein uS2 (241 aa).

The protein belongs to the universal ribosomal protein uS2 family.

In Enterobacter sp. (strain 638), this protein is Small ribosomal subunit protein uS2.